The chain runs to 119 residues: MARVTVEDCVEKVPNRFALVLLSAHRARGISAGASLLVDRDNDKNPVVALREIADDVVDHEGLREQLITTLQRVDEHTEAEEEAETLALLADPTHMQMSELELVRALQSDRDGGQEERY.

The protein belongs to the RNA polymerase subunit omega family. The RNAP catalytic core consists of 2 alpha, 1 beta, 1 beta' and 1 omega subunit. When a sigma factor is associated with the core the holoenzyme is formed, which can initiate transcription.

The catalysed reaction is RNA(n) + a ribonucleoside 5'-triphosphate = RNA(n+1) + diphosphate. Functionally, promotes RNA polymerase assembly. Latches the N- and C-terminal regions of the beta' subunit thereby facilitating its interaction with the beta and alpha subunits. The protein is DNA-directed RNA polymerase subunit omega of Caulobacter sp. (strain K31).